The following is a 357-amino-acid chain: Glutamine synthetase root isozyme A (357 aa).

The region spanning 19–99 is the GS beta-grasp domain; sequence IIAEYIWVGG…VICDVYTPAG (81 aa). The 252-residue stretch at 106-357 folds into the GS catalytic domain; sequence KRYNAAKIFS…AETTILWKKP (252 aa).

This sequence belongs to the glutamine synthetase family. In terms of assembly, homooctamer.

The protein resides in the cytoplasm. It catalyses the reaction L-glutamate + NH4(+) + ATP = L-glutamine + ADP + phosphate + H(+). The polypeptide is Glutamine synthetase root isozyme A (GS3A) (Pisum sativum (Garden pea)).